A 289-amino-acid polypeptide reads, in one-letter code: MTARLLRGGPAADALLAEATARAARLPAPPQLVMLRLGEDPASVSYVRGKDRKAREVGLKSTVYALPETTSQAELLDLIARLNADDTVNGILVQLPLPLHIQEQAVLHAIDPRKDVDGFHPLNVGELWAGRPALRPCTPAGILYLLDHYGIPVAGQRAVVVGRSSIVGRPLAGLLLHRDATVTVAHSRTPDLGAVTREADLLCVAVGRPHLITPDMVRPGATVVDVGINRVLGEGGGKAQLTGDVAPEVAQVAGAITPVPGGVGPMTIAQLLANTVLAAELQAKGRAAR.

Residues G162–S164, S187, and I228 contribute to the NADP(+) site.

The protein belongs to the tetrahydrofolate dehydrogenase/cyclohydrolase family. Homodimer.

It catalyses the reaction (6R)-5,10-methylene-5,6,7,8-tetrahydrofolate + NADP(+) = (6R)-5,10-methenyltetrahydrofolate + NADPH. It carries out the reaction (6R)-5,10-methenyltetrahydrofolate + H2O = (6R)-10-formyltetrahydrofolate + H(+). It participates in one-carbon metabolism; tetrahydrofolate interconversion. Catalyzes the oxidation of 5,10-methylenetetrahydrofolate to 5,10-methenyltetrahydrofolate and then the hydrolysis of 5,10-methenyltetrahydrofolate to 10-formyltetrahydrofolate. The sequence is that of Bifunctional protein FolD 2 from Deinococcus geothermalis (strain DSM 11300 / CIP 105573 / AG-3a).